The primary structure comprises 246 residues: CTD nuclear envelope phosphatase 1 homolog (246 aa).

A helical membrane pass occupies residues 3–23 (TIAQSVFCFLAGFFNFFLLYF). Positions 53–220 (LTVKRKILVL…LNLLPFLDAL (168 aa)) constitute an FCP1 homology domain.

The protein belongs to the dullard family.

It is found in the membrane. The protein localises to the nucleus envelope. The enzyme catalyses O-phospho-L-seryl-[protein] + H2O = L-seryl-[protein] + phosphate. It carries out the reaction O-phospho-L-threonyl-[protein] + H2O = L-threonyl-[protein] + phosphate. Functionally, serine/threonine protein phosphatase that may dephosphorylate and activate lipin-like phosphatases. Lipins are phosphatidate phosphatases that catalyze the conversion of phosphatidic acid to diacylglycerol and control the metabolism of fatty acids at different levels. May indirectly modulate the lipid composition of nuclear and/or endoplasmic reticulum membranes and be required for proper nuclear membrane morphology and/or dynamics. Contributes to closure of nuclear envelope (NE) holes and prevents excess nuclear membranes after meiosis and mitosis, possibly through spatial regulation of lipin. May limit the production of endoplasmic reticulum (ER) sheets proximal to the NE to prevent the ER membranes that feed into NE openings from invading the nuclear interior and thereby restrict nuclear transport to nuclear pore complexes (NPCs). May also indirectly regulate the production of lipid droplets and triacylglycerol. The protein is CTD nuclear envelope phosphatase 1 homolog (cnep-1) of Caenorhabditis elegans.